The following is a 363-amino-acid chain: Palmitoyltransferase ZDHHC9 (363 aa).

At 1 to 35 the chain is on the cytoplasmic side; that stretch reads MSVMVVRKKVTRKWEKLPGRNTFCCDGRVMMARQK. The helical transmembrane segment at 36–56 threads the bilayer; sequence GIFYLTLFLILGTCTLFFAFE. At 57–63 the chain is on the lumenal side; the sequence is CRYLAVQ. Residues 64–84 traverse the membrane as a helical segment; the sequence is LSPAIPVFAAMLFLFSMATLL. Topologically, residues 85–183 are cytoplasmic; it reads RTSFSDPGVI…NCVGKRNYRY (99 aa). Positions 139 to 189 constitute a DHHC domain; that stretch reads KYCYTCKIFRPPRASHCSICDNCVERFDHHCPWVGNCVGKRNYRYFYLFIL. The active-site S-palmitoyl cysteine intermediate is the Cys169. The helical transmembrane segment at 184–204 threads the bilayer; sequence FYLFILSLSLLTIYVFAFNIV. At 205–228 the chain is on the lumenal side; that stretch reads YVALKSLKIGFLETLKETPGTVLE. The helical transmembrane segment at 229-249 threads the bilayer; sequence VLICFFTLWSVVGLTGFHTFL. Topologically, residues 250 to 363 are cytoplasmic; that stretch reads VALNQTTNED…PPQEVTEAEK (114 aa). The disordered stretch occupies residues 303 to 363; sequence PLEESGSRPP…PPQEVTEAEK (61 aa). A compositionally biased stretch (polar residues) spans 310–322; the sequence is RPPSTQEASTSLL. Over residues 345-355 the composition is skewed to pro residues; that stretch reads EMPPPEPPEPP.

It belongs to the DHHC palmitoyltransferase family. ERF2/ZDHHC9 subfamily. Interacts with GOLGA7.

The protein resides in the endoplasmic reticulum membrane. Its subcellular location is the golgi apparatus membrane. It catalyses the reaction L-cysteinyl-[protein] + hexadecanoyl-CoA = S-hexadecanoyl-L-cysteinyl-[protein] + CoA. Functionally, palmitoyltransferase that catalyzes the addition of palmitate onto various protein substrates, such as ADRB2, GSDMD, HRAS, NRAS and CGAS. The ZDHHC9-GOLGA7 complex is a palmitoyltransferase specific for HRAS and NRAS. May have a palmitoyltransferase activity toward the beta-2 adrenergic receptor/ADRB2 and therefore regulate G protein-coupled receptor signaling. Acts as a regulator of innate immunity by catalyzing palmitoylation of CGAS, thereby promoting CGAS homodimerization and cyclic GMP-AMP synthase activity. Activates pyroptosis by catalyzing palmitoylation of gasdermin-D (GSDMD), thereby promoting membrane translocation and pore formation of GSDMD. This chain is Palmitoyltransferase ZDHHC9 (ZDHHC9), found in Bos taurus (Bovine).